Consider the following 311-residue polypeptide: MNSFLEYTICNRGTNAYSPKAGYHHLDQAFPGPFHTGHASDSYNADGRLYVGGSNQPPTAAAQHQHQNGIYAHHQHQNQTGMGLTYGGTGTTSYGTQACANSDYAQHQYFINPEQDGMYYHSSGFSTSNASPHYGSMAGAYCGAQGAVPAAPYQHHGCEGQDHQRAYSQGTYADLSASQGTEKDTDQPPPGKTFDWMKVKRNPPKTGKVAEYGLGPQNTIRTNFTTKQLTELEKEFHFSKYLTRARRVEIAATLELNETQVKIWFQNRRMKQKKREKEGLAPASSTSSKDLEDQSDHSTSTSPEASPSPDS.

A DNA-binding region (homeobox) is located at residues 217-276 (QNTIRTNFTTKQLTELEKEFHFSKYLTRARRVEIAATLELNETQVKIWFQNRRMKQKKRE). The interval 267 to 311 (NRRMKQKKREKEGLAPASSTSSKDLEDQSDHSTSTSPEASPSPDS) is disordered. Positions 298 to 311 (STSTSPEASPSPDS) are enriched in low complexity.

The protein belongs to the Antp homeobox family. Labial subfamily.

The protein resides in the nucleus. Sequence-specific transcription factor which is part of a developmental regulatory system that provides cells with specific positional identities on the anterior-posterior axis. The protein is Homeobox protein Hox-B1a (hoxb1a) of Danio rerio (Zebrafish).